We begin with the raw amino-acid sequence, 191 residues long: Protein Ves (191 aa).

Belongs to the Ves family.

The polypeptide is Protein Ves (Escherichia coli O139:H28 (strain E24377A / ETEC)).